The following is a 499-amino-acid chain: MKRQEFALFSLTLMLSPWRRVLLPAVLAAMAGPALAQLKAPSQASRATGIFVPQSSDVAVPSSQPQLGVPQPSSGGKRSQLVDEVVAVVNNSVITRRELLDRADEIEAQLRTANRPAPPRADLLGEVLERLIMERVQTQAAQDAGIKVTDQELDRAIESVAQQNRLSATELRRRVEASGMTWTKYRDELRKQVQVIRLREREVDSKVQVYDGEIDNYLAARGGQGAAATGPTEFNVSQILVRVPENASDAQKQELQKKAEQLLKQAQGGADFAQLAQANSQGPEAAQGGAIGFREIGRLPALFANAVVDLQPGAVAPEVVESANGFHILKLTAKRVAPASTSASSPAAASRITQTQVRHILIRTGPNMPEAEARRQLGTLRDRITHGGDFADAAKRFSQDGSAQAGGELGWVSPGELVPEFEQAMNRLRPGEISEPVVTQFGVHLIQVENRRETEMAPEKQRDFARAEIREQKLRAAYDDWVRQLRSQAYVEYRVNRQR.

The signal sequence occupies residues 1–36 (MKRQEFALFSLTLMLSPWRRVLLPAVLAAMAGPALA). PpiC domains follow at residues 231-333 (PTEF…KLTA) and 352-450 (ITQT…QVEN).

The protein localises to the periplasm. The catalysed reaction is [protein]-peptidylproline (omega=180) = [protein]-peptidylproline (omega=0). In terms of biological role, chaperone involved in the correct folding and assembly of outer membrane proteins. Recognizes specific patterns of aromatic residues and the orientation of their side chains, which are found more frequently in integral outer membrane proteins. May act in both early periplasmic and late outer membrane-associated steps of protein maturation. This Cupriavidus pinatubonensis (strain JMP 134 / LMG 1197) (Cupriavidus necator (strain JMP 134)) protein is Chaperone SurA.